The chain runs to 257 residues: Adenylate kinase (257 aa).

An ATP-binding site is contributed by 52–57; sequence GAGKGT. An NMP region spans residues 72-101; it reads ATGDMLRSQVAKKTELGKEAKKIMDQGGLV. AMP contacts are provided by residues Thr73, Arg78, 99–101, 128–131, and Gln135; these read GLV and GFPR. The LID stretch occupies residues 169–206; the sequence is GRLVHPASGRSYHKIFNPPKNDMKDDVTGEPLIQRSDD. Residues Arg170 and 179–180 each bind ATP; that span reads SY. AMP-binding residues include Arg203 and Arg214. Gln242 is an ATP binding site.

Belongs to the adenylate kinase family. AK2 subfamily. Monomer.

Its subcellular location is the cytoplasm. The protein localises to the cytosol. It is found in the mitochondrion intermembrane space. The catalysed reaction is AMP + ATP = 2 ADP. In terms of biological role, catalyzes the reversible transfer of the terminal phosphate group between ATP and AMP. Plays an important role in cellular energy homeostasis and in adenine nucleotide metabolism. Adenylate kinase activity is critical for regulation of the phosphate utilization and the AMP de novo biosynthesis pathways. This Aspergillus fumigatus (strain CBS 144.89 / FGSC A1163 / CEA10) (Neosartorya fumigata) protein is Adenylate kinase (adk1).